The sequence spans 997 residues: Pro-apoptotic serine protease NMA111 (997 aa).

The tract at residues 1–43 (MTISLSNIKKRDHSKISDGTSGESSLVKRKQLESATGDQEEEY) is disordered. Residues 83-273 (VVSIHFSQVA…LPLDRILRAL (191 aa)) are serine protease. Active-site charge relay system residues include histidine 121, aspartate 152, and serine 235. 2 PDZ domains span residues 300–378 (RRLG…QRGG) and 779–854 (EEWI…VRDG).

The protein belongs to the peptidase S1C family. As to quaternary structure, interacts with BIR1.

Its subcellular location is the nucleus. Nuclear serine protease which mediates apoptosis through proteolysis of the apoptotic inhibitor BIR1. This Saccharomyces cerevisiae (strain YJM789) (Baker's yeast) protein is Pro-apoptotic serine protease NMA111 (NMA111).